The primary structure comprises 293 residues: Putative ribose uptake protein RbsU (293 aa).

Transmembrane regions (helical) follow at residues 5–24 (ALLI…TVAS), 34–51 (IIGA…LAVV), 58–80 (TGTN…IITF), 95–114 (TTAF…LGNW), 121–138 (IIGF…RMTV), 153–170 (RAVV…LYSA), 177–199 (IDGL…IYGF), 212–234 (ITWL…LISA), 241–263 (LATG…IYFL), and 273–292 (VITI…TVFI).

The protein belongs to the GRP transporter (TC 2.A.7.5) family.

The protein localises to the cell membrane. Could be involved in the uptake of ribose. In Staphylococcus aureus (strain COL), this protein is Putative ribose uptake protein RbsU (rbsU).